We begin with the raw amino-acid sequence, 434 residues long: Nicotinate phosphoribosyltransferase (434 aa).

The residue at position 242 (His242) is a Phosphohistidine; by autocatalysis.

This sequence belongs to the NAPRTase family. Post-translationally, transiently phosphorylated on a His residue during the reaction cycle. Phosphorylation strongly increases the affinity for substrates and increases the rate of nicotinate D-ribonucleotide production. Dephosphorylation regenerates the low-affinity form of the enzyme, leading to product release.

It catalyses the reaction nicotinate + 5-phospho-alpha-D-ribose 1-diphosphate + ATP + H2O = nicotinate beta-D-ribonucleotide + ADP + phosphate + diphosphate. Its pathway is cofactor biosynthesis; NAD(+) biosynthesis; nicotinate D-ribonucleotide from nicotinate: step 1/1. Its function is as follows. Catalyzes the synthesis of beta-nicotinate D-ribonucleotide from nicotinate and 5-phospho-D-ribose 1-phosphate at the expense of ATP. The protein is Nicotinate phosphoribosyltransferase of Nitrobacter hamburgensis (strain DSM 10229 / NCIMB 13809 / X14).